Here is a 279-residue protein sequence, read N- to C-terminus: HTH-type transcriptional regulator BhcR (279 aa).

Positions 1–13 are enriched in basic residues; that stretch reads MSVQIRKRGRPRG. The disordered stretch occupies residues 1-21; sequence MSVQIRKRGRPRGRAGGLGAE. One can recognise an HTH iclR-type domain in the interval 26 to 87; sequence IRALDRALDI…SQTQAWHVGP (62 aa). The segment at residues 47–66 is a DNA-binding region (H-T-H motif); the sequence is LTEIAQRLDMAPSTVHRVLV. In terms of domain architecture, IclR-ED spans 102–271; sequence LVERARPLLR…ARELSFGMAP (170 aa).

Transcriptional regulator of the bhc gene cluster involved in glycolate and glyoxylate assimilation via the beta-hydroxyaspartate cycle (BHAC). Glyoxylate negatively affects the interaction of BhcR with the promoter region of the bhc gene cluster. The sequence is that of HTH-type transcriptional regulator BhcR from Paracoccus denitrificans (strain Pd 1222).